A 578-amino-acid polypeptide reads, in one-letter code: Triokinase/FMN cyclase (578 aa).

The DhaK domain occupies 9–336 (SVEGCAGDAL…IDAETNAKAW (328 aa)). Residues 56-59 (GSGH), K109, and D114 each bind dihydroxyacetone. H221 (tele-hemiaminal-histidine intermediate) is an active-site residue. The region spanning 372–571 (KQMTLVLDRI…AAAIFRAILE (200 aa)) is the DhaL domain. Residues 401-404 (DGDC), 446-447 (SS), G486, and 494-495 (TM) each bind ATP. A phosphoserine mark is found at S511 and S545. An ATP-binding site is contributed by 556–558 (DPG).

The protein belongs to the dihydroxyacetone kinase (DAK) family. As to quaternary structure, homodimer. Interacts with IFIH1 (via the CARD domains), the interaction is inhibited by viral infection. It depends on Mg(2+) as a cofactor. Mn(2+) is required as a cofactor. Requires Co(2+) as cofactor.

It carries out the reaction dihydroxyacetone + ATP = dihydroxyacetone phosphate + ADP + H(+). It catalyses the reaction D-glyceraldehyde + ATP = D-glyceraldehyde 3-phosphate + ADP + H(+). The catalysed reaction is FAD = riboflavin cyclic-4',5'-phosphate + AMP + H(+). Its activity is regulated as follows. Each activity is inhibited by the substrate(s) of the other. Functionally, catalyzes both the phosphorylation of dihydroxyacetone and of glyceraldehyde, and the splitting of ribonucleoside diphosphate-X compounds among which FAD is the best substrate. Represses IFIH1-mediated cellular antiviral response. This chain is Triokinase/FMN cyclase (Tkfc), found in Rattus norvegicus (Rat).